The primary structure comprises 238 residues: MTDQNETQDTNPVTTRRGVRSFVLRQGRMTEGQKKAFDRNWAKYGLSRDNGMIDPREVFGRDNMLNLEIGFGMGKSLADMAEAAPEQDFIGVEVHLPGVGALLKEVESRGLENVRVYSIDANDVIDLCLPDACLDRVMVFFPDPWHKKKHHKRRLIQPEFVQRIRHKLRVGGILHLATDWENYAEHMLEVMSASEGFANTQEQGGYSPKPDDRPITKFEKRGESLGHGVWDLLFYRTN.

S-adenosyl-L-methionine is bound by residues Glu68, Glu93, Asp120, and Asp143. Asp143 is a catalytic residue. Substrate contacts are provided by residues Lys147, Asp179, and Thr216–Glu219.

The protein belongs to the class I-like SAM-binding methyltransferase superfamily. TrmB family.

The catalysed reaction is guanosine(46) in tRNA + S-adenosyl-L-methionine = N(7)-methylguanosine(46) in tRNA + S-adenosyl-L-homocysteine. The protein operates within tRNA modification; N(7)-methylguanine-tRNA biosynthesis. Catalyzes the formation of N(7)-methylguanine at position 46 (m7G46) in tRNA. In Marinobacter nauticus (strain ATCC 700491 / DSM 11845 / VT8) (Marinobacter aquaeolei), this protein is tRNA (guanine-N(7)-)-methyltransferase.